The sequence spans 524 residues: Tissue-resident T-cell transcription regulator protein ZNF683 (524 aa).

Positions Asn-130–Gly-142 are enriched in basic and acidic residues. Disordered regions lie at residues Asn-130–Ser-166 and Gln-265–Gln-303. C2H2-type zinc fingers lie at residues Tyr-322–His-344 and Phe-350–His-372. The segment at Arg-398–His-420 adopts a C2H2-type 3; degenerate zinc-finger fold. The C2H2-type 4 zinc finger occupies Phe-426 to His-448.

It belongs to the krueppel C2H2-type zinc-finger protein family. Expressed in terminally differentiated effector CD8(+) T-cells, but not in naive and central memory cells. Expressed in terminally differentiated natural killer (NK) cells and natural killer (NKT) T-cells (at protein level). Expressed strongly in effector-type CD8(+) T-cells and weakly in naive and memory CD8(+) T-cells. Expressed in terminally differentiated natural killer (NK) cells. Isoform 2 is strongly expressed in effector CD8(+) T and natural killer (NK) cells. Isoform 1 is expressed in effector CD8(+) T and natural killer (NK) cells. As to expression, (Microbial infection) Expressed in cytomegalovirus (CMV)-infected effector CD8(+) T-cells (at protein level).

It localises to the nucleus. Its function is as follows. Transcription factor that mediates a transcriptional program in various innate and adaptive immune tissue-resident lymphocyte T-cell types such as tissue-resident memory T (Trm), natural killer (trNK) and natural killer T (NKT) cells and negatively regulates gene expression of proteins that promote the egress of tissue-resident T-cell populations from non-lymphoid organs. Plays a role in the development, retention and long-term establishment of adaptive and innate tissue-resident lymphocyte T cell types in non-lymphoid organs, such as the skin and gut, but also in other nonbarrier tissues like liver and kidney, and therefore may provide immediate immunological protection against reactivating infections or viral reinfection. Also plays a role in the differentiation of both thymic and peripheral NKT cells. Negatively regulates the accumulation of interferon-gamma (IFN-gamma) in NKT cells at steady state or after antigenic stimulation. Positively regulates granzyme B production in NKT cells after innate stimulation. Associates with the transcriptional repressor PRDM1/BLIMP1 to chromatin at gene promoter regions. Functionally, lacks transcriptional repressor activity. Binds to DNA within promoter regions of the transcriptional repressor PRDM1/BLIMP1 target sites. Unable to regulate interferon-gamma (IFN-gamma) production in cytomegalovirus (CMV)-infected effector CD8(+) T-cells. Transcriptional repressor that binds to DNA within promoter regions of the transcriptional repressor PRDM1/BLIMP1 target sites. Regulates interferon-gamma (IFN-gamma) production in cytomegalovirus (CMV)-infected effector CD8(+) T cells. This Homo sapiens (Human) protein is Tissue-resident T-cell transcription regulator protein ZNF683.